The primary structure comprises 447 residues: NADH-quinone oxidoreductase subunit N (447 aa).

A run of 13 helical transmembrane segments spans residues 4-24 (FAAL…MLAA), 27-47 (LPGL…VALA), 68-88 (LTGL…RPDG), 92-112 (EGPA…GAVH), 113-133 (AASL…LFVL), 146-166 (FLIL…LGHA), 181-201 (ALLT…LALV), 215-235 (PGAA…TALV), 245-265 (VWAL…NLAA), 280-300 (VGHA…APAA), 302-322 (LFYI…AALI), 342-362 (GAAM…AGFF), and 376-395 (AWAL…YYYL).

It belongs to the complex I subunit 2 family. NDH-1 is composed of 14 different subunits. Subunits NuoA, H, J, K, L, M, N constitute the membrane sector of the complex.

The protein resides in the cell inner membrane. The enzyme catalyses a quinone + NADH + 5 H(+)(in) = a quinol + NAD(+) + 4 H(+)(out). NDH-1 shuttles electrons from NADH, via FMN and iron-sulfur (Fe-S) centers, to quinones in the respiratory chain. The immediate electron acceptor for the enzyme in this species is believed to be ubiquinone. Couples the redox reaction to proton translocation (for every two electrons transferred, four hydrogen ions are translocated across the cytoplasmic membrane), and thus conserves the redox energy in a proton gradient. This chain is NADH-quinone oxidoreductase subunit N, found in Cereibacter sphaeroides (strain ATCC 17025 / ATH 2.4.3) (Rhodobacter sphaeroides).